Reading from the N-terminus, the 298-residue chain is Tyrosine recombinase XerC (298 aa).

The region spanning 1–84 (MNHIQEAFLN…TLRTFYEYWM (84 aa)) is the Core-binding (CB) domain. In terms of domain architecture, Tyr recombinase spans 105–286 (YLPQFFYEEE…SNQQLRKVYL (182 aa)). Catalysis depends on residues R145, K169, H238, R241, and H264. Y273 acts as the O-(3'-phospho-DNA)-tyrosine intermediate in catalysis.

This sequence belongs to the 'phage' integrase family. XerC subfamily. As to quaternary structure, forms a cyclic heterotetrameric complex composed of two molecules of XerC and two molecules of XerD.

The protein localises to the cytoplasm. Functionally, site-specific tyrosine recombinase, which acts by catalyzing the cutting and rejoining of the recombining DNA molecules. The XerC-XerD complex is essential to convert dimers of the bacterial chromosome into monomers to permit their segregation at cell division. It also contributes to the segregational stability of plasmids. This Staphylococcus aureus (strain bovine RF122 / ET3-1) protein is Tyrosine recombinase XerC.